The primary structure comprises 426 residues: Delta-aminolevulinic acid dehydratase, chloroplastic (426 aa).

The transit peptide at 1–45 directs the protein to the chloroplast; sequence MASTVSFSPANVQMLQGRSCHGHAAFGGCSAVPRTGPRMRSVAVR. A disordered region spans residues 74–107; the sequence is GRFPAPPPLVRPKAPEGTPQIRPLDLTKRPRRNR. The active-site Schiff-base intermediate with substrate is the lysine 293. Positions 303 and 315 each coordinate 5-aminolevulinate. Glutamate 331 is a Mg(2+) binding site. Lysine 346 acts as the Schiff-base intermediate with substrate in catalysis. Residues serine 372 and tyrosine 411 each coordinate 5-aminolevulinate.

It belongs to the ALAD family. As to quaternary structure, homooctamer. Mg(2+) is required as a cofactor.

It localises to the plastid. Its subcellular location is the chloroplast. It carries out the reaction 2 5-aminolevulinate = porphobilinogen + 2 H2O + H(+). It functions in the pathway porphyrin-containing compound metabolism; protoporphyrin-IX biosynthesis; coproporphyrinogen-III from 5-aminolevulinate: step 1/4. In terms of biological role, catalyzes an early step in the biosynthesis of tetrapyrroles. Binds two molecules of 5-aminolevulinate per subunit, each at a distinct site, and catalyzes their condensation to form porphobilinogen. The chain is Delta-aminolevulinic acid dehydratase, chloroplastic (HEMB) from Oryza sativa subsp. japonica (Rice).